Here is a 553-residue protein sequence, read N- to C-terminus: Heterochromatin protein 1-binding protein 3 (553 aa).

N-acetylalanine is present on Ala-2. Ser-6 is modified (phosphoserine). Residues 30 to 131 (LGEKADDSTM…SKEKEKKVKK (102 aa)) are disordered. Position 51 is a phosphothreonine (Thr-51). The segment covering 60–71 (GEEEKPEPDGSS) has biased composition (acidic residues). Residue Lys-64 forms a Glycyl lysine isopeptide (Lys-Gly) (interchain with G-Cter in SUMO2) linkage. Thr-85 is subject to Phosphothreonine. Residues 91 to 127 (REAEQPKGEPESGEKEESKSAEETKKEEKDQSKEKEK) are compositionally biased toward basic and acidic residues. A Glycyl lysine isopeptide (Lys-Gly) (interchain with G-Cter in SUMO2) cross-link involves residue Lys-97. A phosphoserine mark is found at Ser-142, Ser-155, and Ser-156. The 76-residue stretch at 157 to 232 (PRPKMDAILT…GASGSFVVVQ (76 aa)) folds into the H15 1 domain. Lys-190 is subject to N6-acetyllysine. The disordered stretch occupies residues 231–251 (VQKSKTPQKSKNRKKGSAVDP). Positions 236–246 (TPQKSKNRKKG) are enriched in basic residues. The residue at position 247 (Ser-247) is a Phosphoserine. The short motif at 253–257 (PQVKL) is the PxVxL motif element. H15 domains follow at residues 253–328 (PQVK…QLKK) and 335–411 (LGGS…QLCF). Residue Lys-256 forms a Glycyl lysine isopeptide (Lys-Gly) (interchain with G-Cter in SUMO2) linkage. The tract at residues 422–553 (PKKVSDGSED…MKKKSFKTKK (132 aa)) is disordered. Residues 428-449 (GSEDEDEEEDEEESSEDSEDEE) are compositionally biased toward acidic residues. 3 positions are modified to phosphoserine: Ser-441, Ser-442, and Ser-445. 2 stretches are compositionally biased toward basic residues: residues 488–509 (GKVR…RKGR) and 542–553 (SAMKKKSFKTKK).

As to quaternary structure, interacts (via PxVxL motif) with CBX5.

The protein resides in the nucleus. Its subcellular location is the chromosome. Its function is as follows. Component of heterochromatin that maintains heterochromatin integrity during G1/S progression and regulates the duration of G1 phase to critically influence cell proliferative capacity. May play a role in hypoxia-induced oncogenesis. In Rattus norvegicus (Rat), this protein is Heterochromatin protein 1-binding protein 3 (Hp1bp3).